Here is a 149-residue protein sequence, read N- to C-terminus: Angiogenin (149 aa).

The signal sequence occupies residues 1–24 (MVMGLGPLVLIFVLGLGVTPPTLA). Glutamine 25 bears the Pyrrolidone carboxylic acid mark. The Proton acceptor role is filled by histidine 37. A tRNA-binding site is contributed by arginine 45. 3 cysteine pairs are disulfide-bonded: cysteine 50-cysteine 105, cysteine 63-cysteine 116, and cysteine 81-cysteine 131. Residues 55–59 (KRRDL) carry the Nucleolar localization signal motif. The tRNA site is built by cysteine 105 and isoleucine 127. Catalysis depends on histidine 138, which acts as the Proton donor.

The protein belongs to the pancreatic ribonuclease family. As to quaternary structure, homodimer. Interacts with RNH1; inhibiting ANG ribonuclease activity. Interacts with PCNA.

It localises to the secreted. It is found in the nucleus. The protein resides in the nucleolus. Its subcellular location is the cytoplasm. The protein localises to the stress granule. Its activity is regulated as follows. Has weak tRNA ribonuclease activity by itself due to partial autoinhibition by its C-terminus, which folds into a short alpha-helix that partially occludes the substrate-binding site. In absence of stress, the ribonuclease activity is inhibited by RNH1 in the cytoplasm. In response to stress, dissociates from RNH1 in the cytoplasm and associates with cytoplasmic ribosomes with vacant A-sites: ribosomes directly activate the tRNA ribonuclease activity of ANG by refolding the C-terminal alpha-helix. In response to stress, the angiogenic activity of ANG is inhibited by RNH1 in the nucleus. In terms of biological role, secreted ribonuclease that can either promote or restrict cell proliferation of target cells, depending on the context. Endocytosed in target cells via its receptor PLXNB2 and translocates to the cytoplasm or nucleus. Under stress conditions, localizes to the cytoplasm and promotes the assembly of stress granules (SGs): specifically cleaves a subset of tRNAs within anticodon loops to produce tRNA-derived stress-induced fragments (tiRNAs), resulting in translation repression and inhibition of cell proliferation. tiRNas also prevent formation of apoptosome, thereby promoting cell survival. Preferentially cleaves RNAs between a pyrimidine and an adenosine residue, suggesting that it cleaves the anticodon loop of tRNA(Ala) (32-UUAGCAU-38) after positions 33 and 36. Cleaves a subset of tRNAs, including tRNA(Ala), tRNA(Glu), tRNA(Gly), tRNA(Lys), tRNA(Val), tRNA(His), tRNA(Asp) and tRNA(Sec). Under growth conditions and in differentiated cells, translocates to the nucleus and stimulates ribosomal RNA (rRNA) transcription, including that containing the initiation site sequences of 45S rRNA, thereby promoting cell growth and proliferation. Angiogenin induces vascularization of normal and malignant tissues via its ability to promote rRNA transcription. Involved in hematopoietic stem and progenitor cell (HSPC) growth and survival by promoting rRNA transcription in growth conditions and inhibiting translation in response to stress, respectively. Mediates the crosstalk between myeloid and intestinal epithelial cells to protect the intestinal epithelial barrier integrity: secreted by myeloid cells and promotes intestinal epithelial cells proliferation and survival. Also mediates osteoclast-endothelial cell crosstalk in growing bone: produced by osteoclasts and protects the neighboring vascular cells against senescence by promoting rRNA transcription. This is Angiogenin (ANG) from Oryctolagus cuniculus (Rabbit).